The chain runs to 473 residues: Uronate isomerase (473 aa).

Belongs to the metallo-dependent hydrolases superfamily. Uronate isomerase family.

The catalysed reaction is D-glucuronate = D-fructuronate. The enzyme catalyses aldehydo-D-galacturonate = keto-D-tagaturonate. Its pathway is carbohydrate metabolism; pentose and glucuronate interconversion. The polypeptide is Uronate isomerase (Bacillus licheniformis (strain ATCC 14580 / DSM 13 / JCM 2505 / CCUG 7422 / NBRC 12200 / NCIMB 9375 / NCTC 10341 / NRRL NRS-1264 / Gibson 46)).